A 284-amino-acid polypeptide reads, in one-letter code: Tropomyosin alpha-3 chain (284 aa).

M1 is modified (N-acetylmethionine). The segment at 1-40 (MEAIKKKMQMLKLDKENALDRAEQAEAEQKQAEERSKQLE) is disordered. Residues 1–284 (MEAIKKKMQM…DHALNDMTSI (284 aa)) are a coiled coil. The segment covering 12 to 40 (KLDKENALDRAEQAEAEQKQAEERSKQLE) has biased composition (basic and acidic residues). T53 carries the phosphothreonine modification. Phosphoserine occurs at positions 61 and 87. Residues T108 and T252 each carry the phosphothreonine modification. Y261 carries the post-translational modification Phosphotyrosine. S271 is subject to Phosphoserine. T282 bears the Phosphothreonine mark. S283 carries the phosphoserine modification.

Belongs to the tropomyosin family. Homodimer. Heterodimer of an alpha (TPM1, TPM3 or TPM4) and a beta (TPM2) chain. Interacts with TMOD1. Interacts with TNNT1.

It localises to the cytoplasm. The protein resides in the cytoskeleton. Its function is as follows. Binds to actin filaments in muscle and non-muscle cells. Plays a central role, in association with the troponin complex, in the calcium dependent regulation of vertebrate striated muscle contraction. Smooth muscle contraction is regulated by interaction with caldesmon. In non-muscle cells is implicated in stabilizing cytoskeleton actin filaments. The chain is Tropomyosin alpha-3 chain (TPM3) from Sus scrofa (Pig).